Here is a 514-residue protein sequence, read N- to C-terminus: Cholesterol side-chain cleavage enzyme, mitochondrial (514 aa).

Residues 1–39 (SFRLSLSASTYAQRGSFTTPEHDFTLFPHRNHSVTSESR) constitute a mitochondrion transit peptide. C461 provides a ligand contact to heme.

This sequence belongs to the cytochrome P450 family. The cofactor is heme.

It is found in the mitochondrion inner membrane. It carries out the reaction 6 reduced [adrenodoxin] + cholesterol + 3 O2 + 6 H(+) = 4-methylpentanal + pregnenolone + 6 oxidized [adrenodoxin] + 4 H2O. It participates in lipid metabolism; C21-steroid hormone metabolism. Catalyzes the side-chain cleavage reaction of cholesterol to pregnenolone, the precursor of most steroid hormones. The sequence is that of Cholesterol side-chain cleavage enzyme, mitochondrial (CYP11A1) from Hypanus americanus (Southern stingray).